The sequence spans 694 residues: Acetyl-coenzyme A synthetase (694 aa).

The interval 1-23 is disordered; it reads MSDKRPRSPCSNNNDELNDSSVL. Over residues 9-23 the composition is skewed to polar residues; that stretch reads PCSNNNDELNDSSVL. CoA contacts are provided by residues 229–232 and T347; that span reads RGKK. Residues 423–425, 447–452, D536, and R551 contribute to the ATP site; these read GEP and DTYWQT. S559 is a CoA binding site. R562 contributes to the ATP binding site. A CoA-binding site is contributed by R628.

This sequence belongs to the ATP-dependent AMP-binding enzyme family.

The enzyme catalyses acetate + ATP + CoA = acetyl-CoA + AMP + diphosphate. The protein is Acetyl-coenzyme A synthetase (ACS) of Cryptosporidium parvum.